We begin with the raw amino-acid sequence, 559 residues long: Small ribosomal subunit protein uS3m (559 aa).

Residues 113–134 (EGTEEERNEVRGRGAGKRVESI) form a disordered region. Basic and acidic residues predominate over residues 120–134 (NEVRGRGAGKRVESI).

Belongs to the universal ribosomal protein uS3 family.

The protein resides in the mitochondrion. In Zea mays (Maize), this protein is Small ribosomal subunit protein uS3m (RPS3).